A 277-amino-acid polypeptide reads, in one-letter code: Large ribosomal subunit protein uL2 (277 aa).

Residues 219–277 (TVRGSVMNPNDHPHGGGEGKAPVGRKAPSTPWGKPALGLKTRNKKAKSDKLIVRRRNEK) are disordered. Residues 264–277 (AKSDKLIVRRRNEK) show a composition bias toward basic and acidic residues.

Belongs to the universal ribosomal protein uL2 family. As to quaternary structure, part of the 50S ribosomal subunit. Forms a bridge to the 30S subunit in the 70S ribosome.

One of the primary rRNA binding proteins. Required for association of the 30S and 50S subunits to form the 70S ribosome, for tRNA binding and peptide bond formation. It has been suggested to have peptidyltransferase activity; this is somewhat controversial. Makes several contacts with the 16S rRNA in the 70S ribosome. The protein is Large ribosomal subunit protein uL2 of Streptococcus gordonii (strain Challis / ATCC 35105 / BCRC 15272 / CH1 / DL1 / V288).